Here is a 112-residue protein sequence, read N- to C-terminus: Prostatic steroid-binding protein C2 (112 aa).

An N-terminal signal peptide occupies residues 1–20 (MRLSLCLLTILVVCCYEANG). Residue Gln21 is modified to Pyrrolidone carboxylic acid.

Belongs to the secretoglobin family. Lipophilin subfamily. Prostatein is composed of three different peptides called C1, C2 and C3. These form covalent C1:C3 (F) and C2:C3 (S) heterodimers whose noncovalent association forms tetrameric (C1:C3/C3:C2) prostatein molecules. Linked by three disulfide bonds to C3. In terms of processing, the N-terminus is blocked.

The protein resides in the secreted. Part of prostatein which is the major secretory glycoprotein of ventral prostate gland. This is Prostatic steroid-binding protein C2 (Psbpc2) from Rattus norvegicus (Rat).